Here is a 312-residue protein sequence, read N- to C-terminus: Iron/alpha-ketoglutarate-dependent dioxygenase penM (312 aa).

The Fe cation site is built by His134, Asp136, and His211. Residues 287 to 312 form a disordered region; the sequence is LGLKSEQPLPDGMEKGSMQETDIGGQ.

The protein belongs to the PhyH family. Homodimer. Requires Fe cation as cofactor.

The enzyme catalyses (-)-cyclopeptine + 2-oxoglutarate + O2 = (Z)-dehydrocyclopeptine + succinate + CO2 + H2O. It carries out the reaction (Z)-dehydrocyclopeptine + 2-oxoglutarate + O2 = (-)-cyclopenine + succinate + CO2. It catalyses the reaction (-)-4'-methoxycyclopeptine + 2-oxoglutarate + O2 = (Z)-4'-methoxydehydrocyclopeptine + succinate + CO2 + H2O. The catalysed reaction is (Z)-4'-methoxydehydrocyclopeptine + 2-oxoglutarate + O2 = (-)-4'-methoxycyclopenine + succinate + CO2. Its pathway is secondary metabolite biosynthesis. It participates in alkaloid biosynthesis. It functions in the pathway mycotoxin biosynthesis. Iron/alpha-ketoglutarate-dependent dioxygenase; part of the gene cluster that mediates the biosynthesis of penigequinolones, potent insecticidal alkaloids that contain a highly modified 10-carbon prenyl group. The first stage is catalyzed by the nonribosomal peptide synthetase penN that condenses anthranilic acid and O-methyl-L-tyrosine to produce 4'-methoxycyclopeptin. 4'-methoxycyclopeptin is then converted to 4'-methoxydehydrocyclopeptin by the ketoglutarate-dependent dioxygenase penM through dehydrogenation to form a double bond between C-alpha and C-beta of the O-methyltyrosine side chain. PenM also converts its first product methoxydehydrocyclopeptin to 4'-methoxycyclopenin. The following conversion of 4'methoxycyclopenin into 4'-methoxyviridicatin is catalyzed by the cyclopenase penL. 4'-methoxyviridicatin is the precursor of quinolone natural products, and is further converted to quinolinone B. The prenyltransferase penI then catalyzes the canonical Friedel-Crafts alkylation of quinolinone B with dimethylallyl cation to yield dimethylallyl quinolone, which is subjected to FAD-dependent dehydrogenation by the FAD-linked oxidoreductase penH to yield conjugated aryl diene. The delta(3') double bond then serves as the site of the second alkylation with DMAPP catalyzed by the prenyltransferase penG to yield a carbenium ion intermediate, which can be attacked by H(2)O to yield a styrenyl quinolone containing a C3'-hydroxyprenyl chain, or undergo cyclization to yield yaequinolones J1 and J2. The conversion of the styrenyl quinolone into the tetrahydrofuran-containing yaequinolone C is performed by the FAD-dependent monooxygenase penE and involves epoxidation of the terminal C7'-C8' olefin, followed by epoxide ring opening initiated by the C3' hydroxyl group. The predicted cysteine hydrolase penJ acts as an epoxide hydrolase that enhances the rate of the 5-exo-tet cyclization step, increasing the yield of yaequinolone C. PenF catalyzes the cationic rearrangement of the epoxide formed by penE (before ring opening to produce yaequinolone C) into yaequinolone D. Finally, the short-chain dehydrogenase/reductase (SDR)-like reductase penD, catalyzes both the dehydration of yaequinolone D and the reduction of the resulting oxonium to yield penigequinolone. The polypeptide is Iron/alpha-ketoglutarate-dependent dioxygenase penM (Penicillium thymicola).